A 645-amino-acid chain; its full sequence is Glucans biosynthesis glucosyltransferase H (645 aa).

Over residues 1–13 (MDGTVTPSPTTTA) the composition is skewed to polar residues. Positions 1-32 (MDGTVTPSPTTTAMPPVSALDAGTPTLPPEAP) are disordered. Helical transmembrane passes span 64 to 84 (LIGGTFATTAIAVWVMLSVLW), 98 to 118 (LFVLLFAWIAMSFASAVAGFV), 423 to 443 (APMWGLLMLIGIGIPLAGGGI), 465 to 485 (AIWIFICTMFVLLAPKLLGYI), 504 to 524 (AVSILLETVLAALMAPVVMYL), 559 to 579 (YGGLTVFGLFMGAVAYAVSPA), and 580 to 600 (LAAWMGPVIVGMALSIPVVAL).

This sequence belongs to the glycosyltransferase 2 family. OpgH subfamily.

The protein resides in the cell inner membrane. It functions in the pathway glycan metabolism; osmoregulated periplasmic glucan (OPG) biosynthesis. Its function is as follows. Involved in the biosynthesis of osmoregulated periplasmic glucans (OPGs). The chain is Glucans biosynthesis glucosyltransferase H from Xanthomonas euvesicatoria pv. vesicatoria (strain 85-10) (Xanthomonas campestris pv. vesicatoria).